The chain runs to 144 residues: Small ribosomal subunit protein bS6 (144 aa).

Residues 95-144 (ELEEGPSAMMQSKSRDDRPRRGEGDDRPRRDDREDRPRRDREPRRMEGGE) are disordered. The span at 107–144 (KSRDDRPRRGEGDDRPRRDDREDRPRRDREPRRMEGGE) shows a compositional bias: basic and acidic residues.

It belongs to the bacterial ribosomal protein bS6 family.

In terms of biological role, binds together with bS18 to 16S ribosomal RNA. The sequence is that of Small ribosomal subunit protein bS6 from Paramagnetospirillum magneticum (strain ATCC 700264 / AMB-1) (Magnetospirillum magneticum).